The following is a 192-amino-acid chain: Actin, muscle (192 aa).

The protein belongs to the actin family.

It localises to the cytoplasm. The protein localises to the cytoskeleton. The catalysed reaction is ATP + H2O = ADP + phosphate + H(+). Functionally, actins are highly conserved proteins that are involved in various types of cell motility and are ubiquitously expressed in all eukaryotic cells. The chain is Actin, muscle from Chionoecetes opilio (Atlantic snow crab).